A 515-amino-acid polypeptide reads, in one-letter code: MSFVVAAPEVVVAAASDLAGIGSAIGAANAAAAVPTMGVLAAGADEVSAAVADLFGAHAQAYQALSAQAALFHEQFVHAMTAGAGAYAGAEAADAAALDVLNGPFQALFGRPLIGDGANGAPGQPGGPGGLLYGNGGNGGNGGIGQPGGAGGDAGLIGNGGNGGIGGPGATGLAGGAGGVGGLLFGDGGNGGAGGLGTGPVGATGGIGGPGGAAVGLFGHGGAGGAGGLGKAGFAGGAGGTGGTGGLLYGNGGNGGNVPSGAADGGAGGDARLIGNGGDGGSVGAAPTGIGNGGNGGNGGWLYGDGGSGGSTLQGFSDGGTGGNAGMFGDGGNGGFSFFDGNGGDGGTGGTLIGNGGDGGNSVQTDGFLRGHGGDGGNAVGLIGNGGAGGAGSAGTGVFAPGGGSGGNGGNGALLVGNGGAGGSGGPTQIPSVAVPVTGAGGTGGNGGTAGLIGNGGNGGAAGVSGDGTPGTGGNGGYAQLIGDGGDGGPGDSGGPGGSGGTGGTLAGQNGSPGG.

Helical transmembrane passes span 1-21 (MSFV…LAGI), 165-185 (IGGP…GLLF), and 199-219 (GPVG…GLFG). The 93-residue stretch at 1-93 (MSFVVAAPEV…AGAYAGAEAA (93 aa)) folds into the PE domain. The segment covering 349-360 (GGTLIGNGGDGG) has biased composition (gly residues). Disordered stretches follow at residues 349-368 (GGTL…TDGF) and 463-515 (GVSG…SPGG).

This sequence belongs to the mycobacterial PE family. PGRS subfamily.

Its subcellular location is the cell membrane. This is an uncharacterized protein from Mycobacterium tuberculosis (strain CDC 1551 / Oshkosh).